Here is an 84-residue protein sequence, read N- to C-terminus: Large ribosomal subunit protein bL27 (84 aa).

A disordered region spans residues 1–22; that stretch reads MAKTKAGGSTKNGRDSAGRRLG.

The protein belongs to the bacterial ribosomal protein bL27 family.

The protein is Large ribosomal subunit protein bL27 of Mesomycoplasma hyopneumoniae (strain 232) (Mycoplasma hyopneumoniae).